Reading from the N-terminus, the 638-residue chain is Asparagine--tRNA ligase, cytoplasmic 2 (638 aa).

Residues 1-16 are compositionally biased toward basic and acidic residues; it reads MESHGKTHQKEHDNDL. 2 disordered regions span residues 1–23 and 62–87; these read MESHGKTHQKEHDNDLSPKPITL and VKKNSPPPPLPVVAAPSPSSGGDQAH.

It belongs to the class-II aminoacyl-tRNA synthetase family.

It is found in the cytoplasm. Its subcellular location is the cytosol. The enzyme catalyses tRNA(Asn) + L-asparagine + ATP = L-asparaginyl-tRNA(Asn) + AMP + diphosphate + H(+). The polypeptide is Asparagine--tRNA ligase, cytoplasmic 2 (Arabidopsis thaliana (Mouse-ear cress)).